The chain runs to 366 residues: DNA-directed RNA polymerase subunit alpha (366 aa).

The segment at 1-260 (MAISDNGGGS…DQLQSFIGSE (260 aa)) is alpha N-terminal domain (alpha-NTD). The interval 274–366 (EGALPYDHNL…ENLSKQYSED (93 aa)) is alpha C-terminal domain (alpha-CTD).

The protein belongs to the RNA polymerase alpha chain family. In terms of assembly, homodimer. The RNAP catalytic core consists of 2 alpha, 1 beta, 1 beta' and 1 omega subunit. When a sigma factor is associated with the core the holoenzyme is formed, which can initiate transcription.

The catalysed reaction is RNA(n) + a ribonucleoside 5'-triphosphate = RNA(n+1) + diphosphate. Functionally, DNA-dependent RNA polymerase catalyzes the transcription of DNA into RNA using the four ribonucleoside triphosphates as substrates. The chain is DNA-directed RNA polymerase subunit alpha from Anaplasma marginale (strain St. Maries).